We begin with the raw amino-acid sequence, 722 residues long: Fatty acid oxidation complex subunit alpha (722 aa).

The segment at 1 to 189 (MIYQGKSLSA…AQGAIDAVVE (189 aa)) is enoyl-CoA hydratase/isomerase. Position 296 (Asp296) interacts with substrate. The tract at residues 311-722 (TKAVNKAAVL…SYFTTDVKLA (412 aa)) is 3-hydroxyacyl-CoA dehydrogenase. NAD(+) contacts are provided by residues Met325, Asp344, 401–403 (VVE), Lys408, and Ser430. His451 acts as the For 3-hydroxyacyl-CoA dehydrogenase activity in catalysis. Position 454 (Asn454) interacts with NAD(+). Positions 501 and 661 each coordinate substrate.

This sequence in the N-terminal section; belongs to the enoyl-CoA hydratase/isomerase family. The protein in the C-terminal section; belongs to the 3-hydroxyacyl-CoA dehydrogenase family. In terms of assembly, heterotetramer of two alpha chains (FadB) and two beta chains (FadA).

The enzyme catalyses a (3S)-3-hydroxyacyl-CoA + NAD(+) = a 3-oxoacyl-CoA + NADH + H(+). It carries out the reaction a (3S)-3-hydroxyacyl-CoA = a (2E)-enoyl-CoA + H2O. It catalyses the reaction a 4-saturated-(3S)-3-hydroxyacyl-CoA = a (3E)-enoyl-CoA + H2O. The catalysed reaction is (3S)-3-hydroxybutanoyl-CoA = (3R)-3-hydroxybutanoyl-CoA. The enzyme catalyses a (3Z)-enoyl-CoA = a 4-saturated (2E)-enoyl-CoA. It carries out the reaction a (3E)-enoyl-CoA = a 4-saturated (2E)-enoyl-CoA. The protein operates within lipid metabolism; fatty acid beta-oxidation. Involved in the aerobic and anaerobic degradation of long-chain fatty acids via beta-oxidation cycle. Catalyzes the formation of 3-oxoacyl-CoA from enoyl-CoA via L-3-hydroxyacyl-CoA. It can also use D-3-hydroxyacyl-CoA and cis-3-enoyl-CoA as substrate. This is Fatty acid oxidation complex subunit alpha from Colwellia psychrerythraea (strain 34H / ATCC BAA-681) (Vibrio psychroerythus).